The following is a 105-amino-acid chain: DNA-binding transcriptional regulator BolA (105 aa).

The protein belongs to the BolA/IbaG family.

Its function is as follows. Transcriptional regulator that plays an important role in general stress response. Has many effects on cell morphology, cell growth and cell division. Acts by regulating the transcription of many genes, including dacA (PBP-5), dacC (PBP-6), ampC and mreB. Probably involved in the coordination of genes that adapt the cell physiology in order to enhance cell adaptation and survival under stress conditions. Essential for normal cell morphology in stationary phase and under conditions of starvation. Also regulates a complex network of genes encoding proteins related to biofilm development, and negatively modulates flagellar biosynthesis and swimming capacity. Could be a motile/adhesive transcriptional switch, specifically involved in the transition between the planktonic and the attachment stage of biofilm formation. Overexpression produces round cell shape, impairs cell growth rate and induces biofilm development. The protein is DNA-binding transcriptional regulator BolA of Escherichia coli (strain K12).